A 470-amino-acid polypeptide reads, in one-letter code: Fumarate hydratase class II (470 aa).

Residues 99 to 101 (SGT), 129 to 132 (HPND), 139 to 141 (SSN), and T187 contribute to the substrate site. The active-site Proton donor/acceptor is the H188. S318 is an active-site residue. Residues S319 and 324 to 326 (KIN) contribute to the substrate site.

It belongs to the class-II fumarase/aspartase family. Fumarase subfamily. Homotetramer.

Its subcellular location is the cytoplasm. The enzyme catalyses (S)-malate = fumarate + H2O. The protein operates within carbohydrate metabolism; tricarboxylic acid cycle; (S)-malate from fumarate: step 1/1. In terms of biological role, involved in the TCA cycle. Catalyzes the stereospecific interconversion of fumarate to L-malate. The sequence is that of Fumarate hydratase class II from Halobacterium salinarum (strain ATCC 700922 / JCM 11081 / NRC-1) (Halobacterium halobium).